Consider the following 97-residue polypeptide: Protein RnfH (97 aa).

The protein belongs to the UPF0125 (RnfH) family.

In Halorhodospira halophila (strain DSM 244 / SL1) (Ectothiorhodospira halophila (strain DSM 244 / SL1)), this protein is Protein RnfH.